A 113-amino-acid chain; its full sequence is U11-theraphotoxin-Hhn1a (113 aa).

The N-terminal stretch at 1–21 is a signal peptide; it reads MNTVRVTFLLVFVLAVSLGQA. The propeptide occupies 22–74; it reads DKDENRMEMQKKTEQGKSYLDFAENLLLQKLEELEAKLLEEDSEESRNSRQKR. Cystine bridges form between C75–C90, C82–C95, and C89–C110.

It belongs to the neurotoxin 14 (magi-1) family. 01 (HNTX-16) subfamily. Expressed by the venom gland.

It is found in the secreted. Probable ion channel inhibitor. The protein is U11-theraphotoxin-Hhn1a of Cyriopagopus hainanus (Chinese bird spider).